Consider the following 599-residue polypeptide: MFNKFNTKPLWEVSKTLSSVAQGFEPADMVIINSRLINVCTREVIENTDVAISCGRIALVGDAKHCIGESTEVIDAKGQYIAPGFLDGHIHVESSMLSVSEYARSVVPHGTVGIYMDPHEICNVLGLNGVRYMIEDGKGTPLKNMVTTPSCVPAVPGFEDTGAAVGPEDVRETMKWDEIVGLGEMMNFPGILYSTDHAHGVVGETLKASKTVTGHYSLPETGKGLNGYIASGVRCCHESTRAEDALAKMRLGMYTMFREGSAWHDLKEVSKAITGNKVDSRFAVLISDDTHPHTLLKDGHLDHIIKRAIEEGIEPLTAIQMVTINCAQCFQMDHELGSITPGKCADIVLIEDLKDVKITKVIIDGNLVAKDGVLTTSIAKYDYPENAMHSMHIRDKITPASFNIMAQNKEKVTARVIEIIPERVGTYERHIELNVKDDKVQCDPSKDVLKAVVFERHHETGKAGYGFVKGFGIKRGAMAATVAHDAHNLLVIGTNDEDMALAANTLIECGGGMVAVQDGKVLGLVPLPIAGLMSNKPLEEMAEMVEKLDSAWKEIGCDIVSPFMTMALIPLACLPELRLTNRGLVDCNKFEFVSLFVEE.

This sequence belongs to the metallo-dependent hydrolases superfamily. Adenine deaminase family. Mn(2+) serves as cofactor.

It catalyses the reaction adenine + H2O + H(+) = hypoxanthine + NH4(+). This chain is Adenine deaminase, found in Clostridium botulinum (strain Loch Maree / Type A3).